A 463-amino-acid polypeptide reads, in one-letter code: MSNKAWGGRFETQPEEWVDDFNASIDFDKNLIKQDVQGSIAHATMLAKQHIITDDEAQSIINELKNIQSDFEEGKLKFKASLEDIHLNIEHELIQRIGEAGGKLHTGRSRNDQVATDMHLYTKEQVQYIIELIASFQETIVQLADQHVDTIMPGYTHLQRAQPISFAHHIMTYFWMLERDKGRFMDSLKRIDISPLGAAALSGTTHPIDRHLTQELLGFANLYENSLDAVSDRDYIVETLHHISLTMVHLSRFAEEIIFWSTDEAKFITLSDAFSTGSSIMPQKKNPDMAELIRGKVGRTTGHLMSMLVTLKGLPLAYNKDMQEDKEGLFDAVHTLKGSLRIFEGMVASMKVNSNRLSQTVKNDFSNATELADYLVSKSVPFRTAHEIVGKIVLNCIHKGIYLLDVPLSEYQEHHENIEEDIYDYLTPENCLKRRQSYGSTGQESVKHQLKVAKALLKDNESK.

Belongs to the lyase 1 family. Argininosuccinate lyase subfamily.

It localises to the cytoplasm. It carries out the reaction 2-(N(omega)-L-arginino)succinate = fumarate + L-arginine. The protein operates within amino-acid biosynthesis; L-arginine biosynthesis; L-arginine from L-ornithine and carbamoyl phosphate: step 3/3. The polypeptide is Argininosuccinate lyase (Staphylococcus epidermidis (strain ATCC 35984 / DSM 28319 / BCRC 17069 / CCUG 31568 / BM 3577 / RP62A)).